Consider the following 215-residue polypeptide: MSKVYDWFEERLEIQSIADDITSKYVPPHVNIFYCLGGITFTCFLVQVATGFAMTFYYRPTVAEAFASVQYIMTEVNFGWLIRSIHRWSASMMVLMMILHVFRVYLTGGFKKPRESTWISGVIMAVCTVSFGVTGYSLPWDQIGYWAVKIVTGVPEAIPVVGGPLVELLRGGVGVGQATLTRFYSLHTFVLPLLTAVFMLAHFLMIRKQGISGPL.

Residues 32 to 52 form a helical membrane-spanning segment; the sequence is IFYCLGGITFTCFLVQVATGF. C35 contacts heme c. Residues H86 and H100 each contribute to the heme b site. The next 3 helical transmembrane spans lie at 90 to 110, 116 to 136, and 186 to 206; these read ASMM…TGGF, STWI…VTGY, and LHTF…FLMI. Residues H187 and H202 each contribute to the heme b site.

This sequence belongs to the cytochrome b family. PetB subfamily. The 4 large subunits of the cytochrome b6-f complex are cytochrome b6, subunit IV (17 kDa polypeptide, PetD), cytochrome f and the Rieske protein, while the 4 small subunits are PetG, PetL, PetM and PetN. The complex functions as a dimer. It depends on heme b as a cofactor. Heme c serves as cofactor.

It localises to the plastid. The protein resides in the chloroplast thylakoid membrane. Its function is as follows. Component of the cytochrome b6-f complex, which mediates electron transfer between photosystem II (PSII) and photosystem I (PSI), cyclic electron flow around PSI, and state transitions. This chain is Cytochrome b6, found in Tetradesmus obliquus (Green alga).